The following is a 225-amino-acid chain: Uridylate kinase (225 aa).

Residue 9–10 participates in ATP binding; sequence GS. G46 is a binding site for UMP. Residues G47 and R51 each contribute to the ATP site. Residues D67 and 115-121 contribute to the UMP site; that span reads THPAHTT. Positions 141, 142, 147, and 150 each coordinate ATP.

Belongs to the UMP kinase family. In terms of assembly, homohexamer.

The protein resides in the cytoplasm. The catalysed reaction is UMP + ATP = UDP + ADP. The protein operates within pyrimidine metabolism; CTP biosynthesis via de novo pathway; UDP from UMP (UMPK route): step 1/1. Inhibited by UTP. Catalyzes the reversible phosphorylation of UMP to UDP. In Methanococcus maripaludis (strain DSM 14266 / JCM 13030 / NBRC 101832 / S2 / LL), this protein is Uridylate kinase.